Reading from the N-terminus, the 259-residue chain is Phosphoadenosine 5'-phosphosulfate reductase (259 aa).

The active-site Nucleophile; cysteine thiosulfonate intermediate is the Cys244.

Belongs to the PAPS reductase family. CysH subfamily.

It localises to the cytoplasm. It carries out the reaction [thioredoxin]-disulfide + sulfite + adenosine 3',5'-bisphosphate + 2 H(+) = [thioredoxin]-dithiol + 3'-phosphoadenylyl sulfate. Its pathway is sulfur metabolism; hydrogen sulfide biosynthesis; sulfite from sulfate: step 3/3. Its function is as follows. Catalyzes the formation of sulfite from phosphoadenosine 5'-phosphosulfate (PAPS) using thioredoxin as an electron donor. The chain is Phosphoadenosine 5'-phosphosulfate reductase from Vibrio campbellii (strain ATCC BAA-1116).